The sequence spans 209 residues: MAKGILGRKIGMTQVFAENGDLIPVTVIEATPNVVLQKKTVETDGYEAIQVGFEDKRVKLSNKPQQGHVAKANTAPKRFIREFRNVNVEEYEVGQEVKVEIFAEGDVIDVTGVTKGKGFQGVIKRHGQSRGPMAHGSRYHRRPGSMGPVAPNRVFKQKKLPGQMGGNVVTIQNLEIVKVDTDRNLLLVKGNVPGSKKALVTVKTASKAK.

Residues 125-148 (RHGQSRGPMAHGSRYHRRPGSMGP) form a disordered region.

This sequence belongs to the universal ribosomal protein uL3 family. As to quaternary structure, part of the 50S ribosomal subunit. Forms a cluster with proteins L14 and L19.

In terms of biological role, one of the primary rRNA binding proteins, it binds directly near the 3'-end of the 23S rRNA, where it nucleates assembly of the 50S subunit. The protein is Large ribosomal subunit protein uL3 of Lysinibacillus sphaericus (strain C3-41).